We begin with the raw amino-acid sequence, 523 residues long: Bifunctional purine biosynthesis protein PurH (523 aa).

One can recognise an MGS-like domain in the interval Met-1–Thr-149.

The protein belongs to the PurH family.

It carries out the reaction (6R)-10-formyltetrahydrofolate + 5-amino-1-(5-phospho-beta-D-ribosyl)imidazole-4-carboxamide = 5-formamido-1-(5-phospho-D-ribosyl)imidazole-4-carboxamide + (6S)-5,6,7,8-tetrahydrofolate. It catalyses the reaction IMP + H2O = 5-formamido-1-(5-phospho-D-ribosyl)imidazole-4-carboxamide. It functions in the pathway purine metabolism; IMP biosynthesis via de novo pathway; 5-formamido-1-(5-phospho-D-ribosyl)imidazole-4-carboxamide from 5-amino-1-(5-phospho-D-ribosyl)imidazole-4-carboxamide (10-formyl THF route): step 1/1. It participates in purine metabolism; IMP biosynthesis via de novo pathway; IMP from 5-formamido-1-(5-phospho-D-ribosyl)imidazole-4-carboxamide: step 1/1. This Chlorobaculum parvum (strain DSM 263 / NCIMB 8327) (Chlorobium vibrioforme subsp. thiosulfatophilum) protein is Bifunctional purine biosynthesis protein PurH.